Consider the following 230-residue polypeptide: Large ribosomal subunit protein uL1 (230 aa).

The protein belongs to the universal ribosomal protein uL1 family. Part of the 50S ribosomal subunit.

Its function is as follows. Binds directly to 23S rRNA. The L1 stalk is quite mobile in the ribosome, and is involved in E site tRNA release. Functionally, protein L1 is also a translational repressor protein, it controls the translation of the L11 operon by binding to its mRNA. In Rhodopseudomonas palustris (strain BisA53), this protein is Large ribosomal subunit protein uL1.